The chain runs to 182 residues: Small ribosomal subunit protein uS4c (182 aa).

Residues 13-32 (GLTSKRPRSGSDLKNPLRSG) are disordered. In terms of domain architecture, S4 RNA-binding spans 82–143 (MRLDNILFRL…KQRSKALIQN (62 aa)).

Belongs to the universal ribosomal protein uS4 family. As to quaternary structure, part of the 30S ribosomal subunit. Contacts protein S5. The interaction surface between S4 and S5 is involved in control of translational fidelity.

Its subcellular location is the plastid. The protein localises to the chloroplast. In terms of biological role, one of the primary rRNA binding proteins, it binds directly to 16S rRNA where it nucleates assembly of the body of the 30S subunit. With S5 and S12 plays an important role in translational accuracy. This is Small ribosomal subunit protein uS4c (rps4) from Scadoxus puniceus (Paintbrush lily).